A 478-amino-acid chain; its full sequence is Cytochrome P450 monooxygenase asqL (478 aa).

Residue C407 coordinates heme.

Belongs to the cytochrome P450 family. Requires heme as cofactor.

It functions in the pathway secondary metabolite biosynthesis. Its pathway is alkaloid biosynthesis. It participates in mycotoxin biosynthesis. Functionally, cytochrome P450 monooxygenase; part of the gene cluster that mediates the biosynthesis of the aspoquinolone mycotoxins. The role of asqL within the aspoquinolone pathway has still to be determined. The first step of the pathway is catalyzed by the nonribosomal peptide synthetase asqK that condenses anthranilic acid and O-methyl-L-tyrosine to produce 4'-methoxycyclopeptin. 4'-methoxycyclopeptin is then converted to 4'-methoxydehydrocyclopeptin by the ketoglutarate-dependent dioxygenase asqJ. AsqJ also converts its first product 4'-methoxydehydrocyclopeptin to 4'-methoxycyclopenin. The following conversion of 4'-methoxycyclopenin into 4'-methoxyviridicatin is catalyzed by the cyclopenase asqI. 4'-methoxyviridicatin is the precursor of quinolone natural products, and is further converted to quinolinone B. The prenyltransferase asqH1 then catalyzes the canonical Friedel-Crafts alkylation of quinolinone B with dimethylallyl cation to yield dimethylallyl quinolone, which is subjected to FAD-dependent dehydrogenation by the FAD-linked oxidoreductase asqF to yield conjugated aryl diene. The delta(3') double bond then serves as the site of the second alkylation with DMAPP catalyzed by the prenyltransferase asqH2 to yield a carbenium ion intermediate, which can be attacked by H(2)O to yield a styrenyl quinolone containing a C3'-hydroxyprenyl chain. The FAD-dependent monooxygenase asqG performs epoxidation of the terminal C7'-C8' olefin. Finally, after dehydratation of the epoxide at C3 by asqC, the quinolone epoxide rearrangement protein asqO catalyzes an enzymatic 3-exo-tet cyclization to yield the cyclopropyl-THF ring system in aspoquinolone. The polypeptide is Cytochrome P450 monooxygenase asqL (Emericella nidulans (strain FGSC A4 / ATCC 38163 / CBS 112.46 / NRRL 194 / M139) (Aspergillus nidulans)).